Here is a 517-residue protein sequence, read N- to C-terminus: ATP synthase subunit alpha (517 aa).

174–181 (GDRQTGKT) is a binding site for ATP.

Belongs to the ATPase alpha/beta chains family. In terms of assembly, F-type ATPases have 2 components, CF(1) - the catalytic core - and CF(0) - the membrane proton channel. CF(1) has five subunits: alpha(3), beta(3), gamma(1), delta(1), epsilon(1). CF(0) has three main subunits: a(1), b(2) and c(9-12). The alpha and beta chains form an alternating ring which encloses part of the gamma chain. CF(1) is attached to CF(0) by a central stalk formed by the gamma and epsilon chains, while a peripheral stalk is formed by the delta and b chains.

The protein localises to the cell inner membrane. It carries out the reaction ATP + H2O + 4 H(+)(in) = ADP + phosphate + 5 H(+)(out). Functionally, produces ATP from ADP in the presence of a proton gradient across the membrane. The alpha chain is a regulatory subunit. In Variovorax paradoxus (strain S110), this protein is ATP synthase subunit alpha.